The chain runs to 769 residues: TSC22 domain family protein 2 (769 aa).

Disordered regions lie at residues A20–P86, H224–M292, A334–P353, and V520–Q563. Positions E28 to D37 are enriched in acidic residues. Positions G229–A252 are enriched in polar residues. Residues G269–L279 are compositionally biased toward low complexity. Residues S531–S541 show a composition bias toward low complexity. Over residues V542–Q563 the composition is skewed to polar residues. The stretch at M691 to L725 forms a coiled coil. Residues S726 to S745 show a composition bias toward polar residues. Residues S726–A769 form a disordered region. Pro residues predominate over residues P754–Q763.

This sequence belongs to the TSC-22/Dip/Bun family. In terms of assembly, interacts with NRBP1. Interacts with PKM isoform M2; the interaction results in reduced nuclear levels of PKM isoform M2, leading to repression of cyclin CCND1 transcription and reduced cell growth. Interacts with WDR77. In terms of tissue distribution, expressed in the cortex, medulla and papilla of the kidney. As to expression, expressed in the kidney.

Reduces the level of nuclear PKM isoform M2 which results in repression of cyclin CCND1 transcription and reduced cell growth. Its function is as follows. May protect kidney cells from hyperosmotic stress. This Mus musculus (Mouse) protein is TSC22 domain family protein 2.